A 291-amino-acid polypeptide reads, in one-letter code: Beta-lactamase CTX-M-15 (291 aa).

The N-terminal stretch at 1-28 is a signal peptide; that stretch reads MVKKSLRQFTLMATATVTLLLGSVPLYA. The active-site Nucleophile; acyl-ester intermediate is serine 73. Residues lysine 76, serine 133, glutamate 169, and serine 240 each contribute to the a beta-lactam site.

It belongs to the class-A beta-lactamase family. As to quaternary structure, monomer.

Its subcellular location is the secreted. It catalyses the reaction a beta-lactam + H2O = a substituted beta-amino acid. Its activity is regulated as follows. Inhibited by the beta-lactamase-blocking agents clavulanic acid and avibactam, via a covalent binding to Ser-73. Extended-spectrum beta-lactamase (ESBL) which confers resistance to penicillins, as well as first, second, third and fourth-generation cephalosporins. Has cefotaxime- and ceftazidime-hydrolyzing activity. Inactive against the carbapenem antibiotics, imipenem, meropenem and ertapenem. The chain is Beta-lactamase CTX-M-15 from Escherichia coli O25b:H4.